The chain runs to 107 residues: Probable 4-amino-4-deoxy-L-arabinose-phosphoundecaprenol flippase subunit ArnE (107 aa).

The EamA domain occupies 31–105; sequence RVWGWLALSL…IIVGIILLGG (75 aa). Helical transmembrane passes span 34-54, 57-77, and 85-105; these read GWLA…LFVL, VPVS…TLAA, and IALR…LLGG.

It belongs to the ArnE family. In terms of assembly, heterodimer of ArnE and ArnF.

The protein resides in the cell inner membrane. It functions in the pathway bacterial outer membrane biogenesis; lipopolysaccharide biosynthesis. Functionally, translocates 4-amino-4-deoxy-L-arabinose-phosphoundecaprenol (alpha-L-Ara4N-phosphoundecaprenol) from the cytoplasmic to the periplasmic side of the inner membrane. The polypeptide is Probable 4-amino-4-deoxy-L-arabinose-phosphoundecaprenol flippase subunit ArnE (Enterobacter sp. (strain 638)).